A 575-amino-acid chain; its full sequence is Physarolisin (575 aa).

An N-terminal signal peptide occupies residues 1-18; sequence MRLLSLLFLLGLATLSFA. Positions 19-173 are cleaved as a propeptide — removed in mature form; sequence VRSQWAQQGR…SIKNARTQVG (155 aa). One can recognise a Peptidase S53 domain in the interval 179 to 574; the sequence is YIVPYVIFDL…SKLLAFVQTL (396 aa). Asn-200 is a glycosylation site (N-linked (GlcNAc...) asparagine). Residues Glu-248 and Asp-252 each act as charge relay system in the active site. 4 N-linked (GlcNAc...) asparagine glycosylation sites follow: Asn-262, Asn-307, Asn-380, and Asn-453. Ser-484 acts as the Charge relay system in catalysis. Positions 529, 530, 552, and 554 each coordinate Ca(2+).

Ca(2+) serves as cofactor. In terms of processing, autocatalytically processed. Post-translationally, N-glycosylated.

It catalyses the reaction Milk clotting activity. Preferential cleavage of 8-Gly-|-Ser-9 in B chain of insulin most rapidly, followed by 11-Leu-|-Val-12, 19-Cys(SO(3)H)-|-Gly and 24-Phe-|-Phe-25. No action on Ac-Phe-Tyr(I)2.. Inhibited by diisopropylfluorophosphate (DFP) and diazoacetyl-D,L-norleucine methyl ester (DAN). This is Physarolisin from Physarum polycephalum (Slime mold).